Reading from the N-terminus, the 218-residue chain is Hypoxanthine-guanine phosphoribosyltransferase (218 aa).

A2 carries the post-translational modification N-acetylalanine. K69 provides a ligand contact to GMP. At K103 the chain carries N6-acetyllysine. A Glycyl lysine isopeptide (Lys-Gly) (interchain with G-Cter in SUMO1); alternate cross-link involves residue K115. K115 participates in a covalent cross-link: Glycyl lysine isopeptide (Lys-Gly) (interchain with G-Cter in SUMO2); alternate. GMP-binding positions include 134 to 142 (EDIIDTGKT), K166, 186 to 188 (KFV), and D194. D138 (proton acceptor) is an active-site residue. T142 carries the post-translational modification Phosphothreonine. Residue D194 coordinates Mg(2+).

It belongs to the purine/pyrimidine phosphoribosyltransferase family. Homotetramer. Requires Mg(2+) as cofactor.

It localises to the cytoplasm. The enzyme catalyses IMP + diphosphate = hypoxanthine + 5-phospho-alpha-D-ribose 1-diphosphate. It carries out the reaction GMP + diphosphate = guanine + 5-phospho-alpha-D-ribose 1-diphosphate. It participates in purine metabolism; IMP biosynthesis via salvage pathway; IMP from hypoxanthine: step 1/1. Its function is as follows. Converts guanine to guanosine monophosphate, and hypoxanthine to inosine monophosphate. Transfers the 5-phosphoribosyl group from 5-phosphoribosylpyrophosphate onto the purine. Plays a central role in the generation of purine nucleotides through the purine salvage pathway. The chain is Hypoxanthine-guanine phosphoribosyltransferase (HPRT1) from Bos taurus (Bovine).